Consider the following 107-residue polypeptide: Ferredoxin Fdx8 (107 aa).

2 consecutive 4Fe-4S ferredoxin-type domains span residues 1–31 (MAYV…GPLA) and 50–79 (LQLY…DEDE). [4Fe-4S] cluster contacts are provided by cysteine 9, cysteine 13, cysteine 17, cysteine 21, cysteine 59, cysteine 62, cysteine 65, and cysteine 69.

[4Fe-4S] cluster is required as a cofactor.

In terms of biological role, ferredoxins are iron-sulfur proteins that transfer electrons in a wide variety of metabolic reactions. Fdx2 can receive electrons from both FdR_A and FdR_B ferredoxin reductases, with a preference for FdR_B compared with FdR_A, and transfer the electrons to the cytochrome P450 CYP260A1. This is Ferredoxin Fdx8 from Sorangium cellulosum (strain So ce56) (Polyangium cellulosum (strain So ce56)).